The chain runs to 256 residues: Triosephosphate isomerase (256 aa).

10-12 (NWK) contributes to the substrate binding site. The Electrophile role is filled by histidine 96. Glutamate 168 serves as the catalytic Proton acceptor. Substrate contacts are provided by glycine 174 and serine 213.

The protein belongs to the triosephosphate isomerase family. As to quaternary structure, homodimer.

It localises to the cytoplasm. The catalysed reaction is D-glyceraldehyde 3-phosphate = dihydroxyacetone phosphate. The protein operates within carbohydrate biosynthesis; gluconeogenesis. It functions in the pathway carbohydrate degradation; glycolysis; D-glyceraldehyde 3-phosphate from glycerone phosphate: step 1/1. In terms of biological role, involved in the gluconeogenesis. Catalyzes stereospecifically the conversion of dihydroxyacetone phosphate (DHAP) to D-glyceraldehyde-3-phosphate (G3P). The sequence is that of Triosephosphate isomerase from Wigglesworthia glossinidia brevipalpis.